A 796-amino-acid chain; its full sequence is Polyribonucleotide nucleotidyltransferase (796 aa).

Positions 490 and 496 each coordinate Mg(2+). The region spanning proline 557 to isoleucine 616 is the KH domain. An S1 motif domain is found at glycine 626–arginine 693. 3 stretches are compositionally biased toward low complexity: residues aspartate 717 to phenylalanine 728, glycine 747 to glycine 759, and serine 769 to arginine 784. A disordered region spans residues aspartate 717–phenylalanine 796. Residues asparagine 785 to phenylalanine 796 show a composition bias toward basic and acidic residues.

It belongs to the polyribonucleotide nucleotidyltransferase family. Mg(2+) serves as cofactor.

The protein resides in the cytoplasm. The catalysed reaction is RNA(n+1) + phosphate = RNA(n) + a ribonucleoside 5'-diphosphate. Its function is as follows. Involved in mRNA degradation. Catalyzes the phosphorolysis of single-stranded polyribonucleotides processively in the 3'- to 5'-direction. In Ehrlichia chaffeensis (strain ATCC CRL-10679 / Arkansas), this protein is Polyribonucleotide nucleotidyltransferase.